The following is a 547-amino-acid chain: Sodium-coupled neutral amino acid transporter 4 (547 aa).

At Met1 to Gly104 the chain is on the extracellular side. Position 49 is a phosphoserine (Ser49). Residues Ile105–Leu125 traverse the membrane as a helical segment. Residues Leu126–Lys151 are Cytoplasmic-facing. A helical transmembrane segment spans residues Ile152–Ile172. Over Ile173 to Tyr195 the chain is Extracellular. Residues Leu196–Leu216 form a helical membrane-spanning segment. At Lys217–Gly220 the chain is on the cytoplasmic side. A helical transmembrane segment spans residues Tyr221–Ile241. Residues Tyr242–Thr332 lie on the Extracellular side of the membrane. Cys249 and Cys321 are disulfide-bonded. 3 N-linked (GlcNAc...) asparagine glycosylation sites follow: Asn260, Asn264, and Asn276. The chain crosses the membrane as a helical span at residues Ala333–Tyr353. Over Ser354–Asn369 the chain is Cytoplasmic. The chain crosses the membrane as a helical span at residues Ile370–Phe390. The Extracellular segment spans residues Tyr391–Ala411. A helical transmembrane segment spans residues Leu412–Phe432. At Pro433–His453 the chain is on the cytoplasmic side. A helical transmembrane segment spans residues Phe454–Ile474. Residues Lys475–Tyr476 are Extracellular-facing. A helical transmembrane segment spans residues Ile477–Phe497. Residues Tyr498–Gly514 lie on the Cytoplasmic side of the membrane. A helical membrane pass occupies residues Ala515–Ile535. Over Asp536–His547 the chain is Extracellular.

This sequence belongs to the amino acid/polyamine transporter 2 family. The disulfide bond plays an important role in substrate transport, but has no effect on trafficking to the cell surface. As to expression, expressed predominantly in liver, and at lower level in skeletal muscle.

The protein localises to the cell membrane. It is found in the cell projection. The protein resides in the microvillus membrane. The catalysed reaction is L-alanine(in) + Na(+)(in) = L-alanine(out) + Na(+)(out). It catalyses the reaction L-serine(in) + Na(+)(in) = L-serine(out) + Na(+)(out). The enzyme catalyses glycine(in) + Na(+)(in) = glycine(out) + Na(+)(out). It carries out the reaction L-cysteine(in) + Na(+)(in) = L-cysteine(out) + Na(+)(out). The catalysed reaction is L-asparagine(in) + Na(+)(in) = L-asparagine(out) + Na(+)(out). It catalyses the reaction L-threonine(in) + Na(+)(in) = L-threonine(out) + Na(+)(out). The enzyme catalyses L-proline(in) + Na(+)(in) = L-proline(out) + Na(+)(out). It carries out the reaction L-methionine(in) + Na(+)(in) = L-methionine(out) + Na(+)(out). The catalysed reaction is L-glutamine(in) + Na(+)(in) = L-glutamine(out) + Na(+)(out). It catalyses the reaction L-histidine(in) + Na(+)(in) = L-histidine(out) + Na(+)(out). Functionally, symporter that cotransports neutral amino acids and sodium ions from the extraccellular to the intracellular side of the cell membrane. The transport is electrogenic, pH dependent and partially tolerates substitution of Na(+) by Li(+). Preferentially transports smaller amino acids, such as glycine, L-alanine, L-serine, L-asparagine and L-threonine, followed by L-cysteine, L-histidine, L-proline and L-glutamine and L-methionine. The chain is Sodium-coupled neutral amino acid transporter 4 from Rattus norvegicus (Rat).